The primary structure comprises 97 residues: Large ribosomal subunit protein eL21 (97 aa).

A disordered region spans residues M1–P26. Residues S9–Q21 show a composition bias toward basic residues.

The protein belongs to the eukaryotic ribosomal protein eL21 family.

In Methanococcus maripaludis (strain C6 / ATCC BAA-1332), this protein is Large ribosomal subunit protein eL21.